We begin with the raw amino-acid sequence, 648 residues long: Macrolide export ATP-binding/permease protein MacB 1 (648 aa).

Residues 6-244 enclose the ABC transporter domain; it reads LQLSGIRRHF…PAPTTSRADT (239 aa). An ATP-binding site is contributed by 42–49; that stretch reads GASGSGKS. Positions 222–248 are disordered; sequence VVADRRREPTPPSPAPTTSRADTGGRG. 4 consecutive transmembrane segments (helical) span residues 273-293, 521-541, 578-598, and 613-633; these read FLTM…VALG, LTLL…IGVM, LVCL…GVLF, and AVLM…FFPA.

Belongs to the ABC transporter superfamily. Macrolide exporter (TC 3.A.1.122) family. In terms of assembly, homodimer. Part of the tripartite efflux system MacAB-TolC, which is composed of an inner membrane transporter, MacB, a periplasmic membrane fusion protein, MacA, and an outer membrane component, TolC. The complex forms a large protein conduit and can translocate molecules across both the inner and outer membranes. Interacts with MacA.

The protein resides in the cell inner membrane. Functionally, part of the tripartite efflux system MacAB-TolC. MacB is a non-canonical ABC transporter that contains transmembrane domains (TMD), which form a pore in the inner membrane, and an ATP-binding domain (NBD), which is responsible for energy generation. Confers resistance against macrolides. The chain is Macrolide export ATP-binding/permease protein MacB 1 from Aeromonas hydrophila subsp. hydrophila (strain ATCC 7966 / DSM 30187 / BCRC 13018 / CCUG 14551 / JCM 1027 / KCTC 2358 / NCIMB 9240 / NCTC 8049).